Consider the following 148-residue polypeptide: Flagellar assembly factor FliW (148 aa).

This sequence belongs to the FliW family. Interacts with translational regulator CsrA and flagellin(s).

The protein resides in the cytoplasm. Its function is as follows. Acts as an anti-CsrA protein, binds CsrA and prevents it from repressing translation of its target genes, one of which is flagellin. Binds to flagellin and participates in the assembly of the flagellum. The polypeptide is Flagellar assembly factor FliW (Ruminiclostridium cellulolyticum (strain ATCC 35319 / DSM 5812 / JCM 6584 / H10) (Clostridium cellulolyticum)).